The sequence spans 342 residues: Cytoplasmic tRNA 2-thiolation protein 1 (342 aa).

Belongs to the TtcA family. CTU1/NCS6/ATPBD3 subfamily.

It localises to the cytoplasm. It functions in the pathway tRNA modification; 5-methoxycarbonylmethyl-2-thiouridine-tRNA biosynthesis. Its function is as follows. Plays a central role in 2-thiolation of mcm(5)S(2)U at tRNA wobble positions of tRNA(Lys), tRNA(Glu) and tRNA(Gln). Directly binds tRNAs and probably acts by catalyzing adenylation of tRNAs, an intermediate required for 2-thiolation. It is unclear whether it acts as a sulfurtransferase that transfers sulfur from thiocarboxylated URM1 onto the uridine of tRNAs at wobble position. This chain is Cytoplasmic tRNA 2-thiolation protein 1, found in Anopheles gambiae (African malaria mosquito).